Consider the following 573-residue polypeptide: PCNA-interacting partner (573 aa).

The disordered stretch occupies residues 463–511; sequence VSEGAQPSVGKARLETSSENVHVDRSKDDKGPRKSTKRKLAKSKQPGVR. Positions 474-494 are enriched in basic and acidic residues; that stretch reads ARLETSSENVHVDRSKDDKGP. The segment covering 495 to 504 has biased composition (basic residues); the sequence is RKSTKRKLAK.

The protein belongs to the PARI family. Interacts with RAD51 and PCNA. Interacts with PARP1. Interacts with TASOR. As to expression, present in testis (at protein level). Expressed in testis, gastrointestinal tract (jejunum, ileum, and colon) and immune system (thymus and spleen). Weakly expressed in lung, kidney, pituitary gland and muscle.

It localises to the cytoplasm. The protein resides in the nucleus. Its function is as follows. Required to suppress inappropriate homologous recombination, thereby playing a central role DNA repair and in the maintenance of genomic stability. Antagonizes homologous recombination by interfering with the formation of the RAD51-DNA homologous recombination structure. Positively regulate the poly(ADP-ribosyl)ation activity of PARP1; however such function may be indirect. Binds single-strand DNA and poly(A) homopolymers. This is PCNA-interacting partner (Parpbp) from Rattus norvegicus (Rat).